A 603-amino-acid chain; its full sequence is Granule-bound starch synthase 1, chloroplastic/amyloplastic (603 aa).

The transit peptide at 1-75 (MATITGSSMP…SEKSLGKIVC (75 aa)) directs the protein to the chloroplast. K91 contributes to the ADP-alpha-D-glucose binding site.

Belongs to the glycosyltransferase 1 family. Bacterial/plant glycogen synthase subfamily. As to expression, expressed in pods and leaves. No expression in flowers or stipules.

Its subcellular location is the plastid. The protein resides in the chloroplast. It localises to the amyloplast. The enzyme catalyses an NDP-alpha-D-glucose + [(1-&gt;4)-alpha-D-glucosyl](n) = [(1-&gt;4)-alpha-D-glucosyl](n+1) + a ribonucleoside 5'-diphosphate + H(+). It participates in glycan biosynthesis; starch biosynthesis. May be responsible for the synthesis of amylose. The sequence is that of Granule-bound starch synthase 1, chloroplastic/amyloplastic from Pisum sativum (Garden pea).